The sequence spans 142 residues: Baculoviral IAP repeat-containing protein 5 (142 aa).

Residues 18 to 88 (RVSTFKNWPF…KHSSGCAFLS (71 aa)) form a BIR repeat. Position 20 is a phosphoserine; by AURKC (Ser20). Lys23 is subject to N6-acetyllysine. The residue at position 34 (Thr34) is a Phosphothreonine; by CDK1 and CDK15. Thr48 bears the Phosphothreonine mark. The Zn(2+) site is built by Cys57, Cys60, His77, and Cys84. Lys90, Lys110, Lys112, and Lys115 each carry N6-acetyllysine. Residue Thr117 is modified to Phosphothreonine; by AURKB. The residue at position 129 (Lys129) is an N6-acetyllysine.

Belongs to the IAP family. Monomer or homodimer. Exists as a homodimer in the apo state and as a monomer in the CPC-bound state. The monomer protects cells against apoptosis more efficiently than the dimer. Only the dimeric form is capable of enhancing tubulin stability in cells. When phosphorylated, interacts with LAMTOR5/HBXIP; the resulting complex binds pro-CASP9, as well as active CASP9, but much less efficiently. Component of the chromosomal passenger complex (CPC) composed of at least BIRC5/survivin, CDCA8/borealin, INCENP, AURKB or AURKC; in the complex forms a triple-helix bundle-based subcomplex with INCENP and CDCA8. Interacts with JTB. Interacts (via BIR domain) with histone H3 phosphorylated at 'Thr-3' (H3pT3). Interacts with EVI5. Interacts with GTP-bound RAN in both the S and M phases of the cell cycle. Interacts with USP9X. Interacts with tubulin. Interacts with BIRC2/c-IAP1. The acetylated form at Lys-129 interacts with STAT3. The monomeric form deacetylated at Lys-129 interacts with XPO1/CRM1. The monomeric form interacts with XIAP/BIRC4. Both the dimeric and monomeric form can interact with DIABLO/SMAC. Interacts with BIRC6/bruce. Interacts with FBXL7; this interaction facilitates the polyubiquitination and subsequent proteasomal degradation of BIRC5 by the SCF(FBXL7) E3 ubiquitin-protein ligase complex. Ubiquitinated by the Cul9-RING ubiquitin-protein ligase complex, leading to its degradation. Ubiquitination is required for centrosomal targeting. Deubiquitinated by USP35 or USP38; leading to stabilization. Post-translationally, acetylation at Lys-129 results in its homodimerization, while deacetylation promotes the formation of monomers which heterodimerize with XPO1/CRM1 which facilitates its nuclear export. The acetylated form represses STAT3 transactivation. The dynamic equilibrium between its acetylation and deacetylation at Lys-129 determines its interaction with XPO1/CRM1, its subsequent subcellular localization, and its ability to inhibit STAT3 transactivation. In terms of processing, in vitro phosphorylation at Thr-117 by AURKB prevents interaction with INCENP and localization to mitotic chromosomes. Phosphorylation at Thr-48 by CK2 is critical for its mitotic and anti-apoptotic activities. Phosphorylation at Thr-34 by CDK15 is critical for its anti-apoptotic activity. Phosphorylation at Ser-20 by AURKC is critical for regulation of proper chromosome alignment and segregation, and possibly cytokinesis.

The protein localises to the cytoplasm. Its subcellular location is the nucleus. It localises to the chromosome. The protein resides in the centromere. It is found in the cytoskeleton. The protein localises to the spindle. Its subcellular location is the kinetochore. It localises to the midbody. Functionally, multitasking protein that has dual roles in promoting cell proliferation and preventing apoptosis. Component of a chromosome passage protein complex (CPC) which is essential for chromosome alignment and segregation during mitosis and cytokinesis. Acts as an important regulator of the localization of this complex; directs CPC movement to different locations from the inner centromere during prometaphase to midbody during cytokinesis and participates in the organization of the center spindle by associating with polymerized microtubules. Involved in the recruitment of CPC to centromeres during early mitosis via association with histone H3 phosphorylated at 'Thr-3' (H3pT3) during mitosis. The complex with RAN plays a role in mitotic spindle formation by serving as a physical scaffold to help deliver the RAN effector molecule TPX2 to microtubules. May counteract a default induction of apoptosis in G2/M phase. The acetylated form represses STAT3 transactivation of target gene promoters. May play a role in neoplasia. Inhibitor of CASP3 and CASP7. Essential for the maintenance of mitochondrial integrity and function. The protein is Baculoviral IAP repeat-containing protein 5 (BIRC5) of Canis lupus familiaris (Dog).